The primary structure comprises 524 residues: Phosphoenolpyruvate carboxykinase (ATP) (524 aa).

The substrate site is built by Arg-52, Tyr-188, and Lys-194. Residues Lys-194, His-213, and 229 to 237 each bind ATP; that span reads GLSGTGKTT. Lys-194 and His-213 together coordinate Mn(2+). Asp-250 contributes to the Mn(2+) binding site. Residues Glu-278, Arg-314, and Thr-439 each contribute to the ATP site. Position 314 (Arg-314) interacts with substrate.

Belongs to the phosphoenolpyruvate carboxykinase (ATP) family. Mn(2+) is required as a cofactor.

It localises to the cytoplasm. The enzyme catalyses oxaloacetate + ATP = phosphoenolpyruvate + ADP + CO2. It participates in carbohydrate biosynthesis; gluconeogenesis. Functionally, involved in the gluconeogenesis. Catalyzes the conversion of oxaloacetate (OAA) to phosphoenolpyruvate (PEP) through direct phosphoryl transfer between the nucleoside triphosphate and OAA. This is Phosphoenolpyruvate carboxykinase (ATP) from Campylobacter lari (strain RM2100 / D67 / ATCC BAA-1060).